The chain runs to 780 residues: ATP-dependent 6-phosphofructokinase, muscle type (780 aa).

At T2 the chain carries N-acetylthreonine. The tract at residues 2 to 390 (THEEHHAAKT…NWEVYKLLAH (389 aa)) is N-terminal catalytic PFK domain 1. ATP contacts are provided by residues G25, 88 to 89 (RC), and 118 to 121 (GDGS). Residue D119 participates in Mg(2+) binding. A Phosphoserine modification is found at S133. Substrate-binding positions include 164–166 (SID), R201, 208–210 (MGR), E264, R292, and 298–301 (HVQR). The active-site Proton acceptor is D166. Residue S377 is modified to Phosphoserine. The interval 391–401 (IRPPVSKSGSH) is interdomain linker. The segment at 402 to 780 (TVAVMNVGAP…SRKRSGEAPA (379 aa)) is C-terminal regulatory PFK domain 2. Beta-D-fructose 2,6-bisphosphate contacts are provided by residues R471 and 528–532 (TVSNN). O-linked (GlcNAc) serine glycosylation occurs at S530. K557 bears the N6-(2-hydroxyisobutyryl)lysine mark. Beta-D-fructose 2,6-bisphosphate-binding positions include R566, 573-575 (MGG), E629, R655, and 661-664 (HMQQ). S667 bears the Phosphoserine mark. R735 provides a ligand contact to beta-D-fructose 2,6-bisphosphate. S775 carries the post-translational modification Phosphoserine.

Belongs to the phosphofructokinase type A (PFKA) family. ATP-dependent PFK group I subfamily. Eukaryotic two domain clade 'E' sub-subfamily. As to quaternary structure, homo- and heterotetramers. Phosphofructokinase (PFK) enzyme functions as a tetramer composed of different combinations of 3 types of subunits, called PFKM (M), PFKL (L) and PFKP (P). The composition of the PFK tetramer differs according to the tissue type it is present in. The kinetic and regulatory properties of the tetrameric enzyme are dependent on the subunit composition, hence can vary across tissues. Interacts (via C-terminus) with HK1 (via N-terminal spermatogenic cell-specific region). Mg(2+) serves as cofactor. GlcNAcylation decreases enzyme activity.

It localises to the cytoplasm. The enzyme catalyses beta-D-fructose 6-phosphate + ATP = beta-D-fructose 1,6-bisphosphate + ADP + H(+). It participates in carbohydrate degradation; glycolysis; D-glyceraldehyde 3-phosphate and glycerone phosphate from D-glucose: step 3/4. With respect to regulation, allosterically activated by ADP, AMP, or fructose 2,6-bisphosphate, and allosterically inhibited by ATP or citrate. Functionally, catalyzes the phosphorylation of D-fructose 6-phosphate to fructose 1,6-bisphosphate by ATP, the first committing step of glycolysis. This is ATP-dependent 6-phosphofructokinase, muscle type (PFKM) from Equus caballus (Horse).